The following is a 620-amino-acid chain: Chaperone protein HscA homolog (620 aa).

The protein belongs to the heat shock protein 70 family.

Chaperone involved in the maturation of iron-sulfur cluster-containing proteins. Has a low intrinsic ATPase activity which is markedly stimulated by HscB. The protein is Chaperone protein HscA homolog of Shewanella baltica (strain OS155 / ATCC BAA-1091).